A 76-amino-acid polypeptide reads, in one-letter code: cAMP-dependent protein kinase inhibitor alpha (76 aa).

Thr2 bears the N-acetylthreonine mark. Positions 49–76 (KTEGEEDAQRNSTEQSGEAQGEAAKSES) are disordered.

It belongs to the PKI family.

Extremely potent competitive inhibitor of cAMP-dependent protein kinase activity, this protein interacts with the catalytic subunit of the enzyme after the cAMP-induced dissociation of its regulatory chains. In Bos taurus (Bovine), this protein is cAMP-dependent protein kinase inhibitor alpha (PKIA).